A 150-amino-acid polypeptide reads, in one-letter code: SsrA-binding protein (150 aa).

The protein belongs to the SmpB family.

It is found in the cytoplasm. Required for rescue of stalled ribosomes mediated by trans-translation. Binds to transfer-messenger RNA (tmRNA), required for stable association of tmRNA with ribosomes. tmRNA and SmpB together mimic tRNA shape, replacing the anticodon stem-loop with SmpB. tmRNA is encoded by the ssrA gene; the 2 termini fold to resemble tRNA(Ala) and it encodes a 'tag peptide', a short internal open reading frame. During trans-translation Ala-aminoacylated tmRNA acts like a tRNA, entering the A-site of stalled ribosomes, displacing the stalled mRNA. The ribosome then switches to translate the ORF on the tmRNA; the nascent peptide is terminated with the 'tag peptide' encoded by the tmRNA and targeted for degradation. The ribosome is freed to recommence translation, which seems to be the essential function of trans-translation. The protein is SsrA-binding protein of Rubrobacter xylanophilus (strain DSM 9941 / JCM 11954 / NBRC 16129 / PRD-1).